A 232-amino-acid chain; its full sequence is Ribosomal RNA small subunit methyltransferase G (232 aa).

Residues Gly-93, Leu-98, Val-144 to Glu-145, and Arg-163 contribute to the S-adenosyl-L-methionine site.

The protein belongs to the methyltransferase superfamily. RNA methyltransferase RsmG family.

The protein localises to the cytoplasm. The catalysed reaction is guanosine(527) in 16S rRNA + S-adenosyl-L-methionine = N(7)-methylguanosine(527) in 16S rRNA + S-adenosyl-L-homocysteine. In terms of biological role, specifically methylates the N7 position of guanine in position 527 of 16S rRNA. The chain is Ribosomal RNA small subunit methyltransferase G from Burkholderia pseudomallei (strain 1710b).